The primary structure comprises 584 residues: Sulfite reductase [NADPH] hemoprotein beta-component (584 aa).

The [4Fe-4S] cluster site is built by C447, C453, C492, and C496. Position 496 (C496) interacts with siroheme.

Belongs to the nitrite and sulfite reductase 4Fe-4S domain family. Alpha(8)-beta(8). The alpha component is a flavoprotein, the beta component is a hemoprotein. The cofactor is siroheme. Requires [4Fe-4S] cluster as cofactor.

The catalysed reaction is hydrogen sulfide + 3 NADP(+) + 3 H2O = sulfite + 3 NADPH + 4 H(+). It functions in the pathway sulfur metabolism; hydrogen sulfide biosynthesis; hydrogen sulfide from sulfite (NADPH route): step 1/1. Its function is as follows. Component of the sulfite reductase complex that catalyzes the 6-electron reduction of sulfite to sulfide. This is one of several activities required for the biosynthesis of L-cysteine from sulfate. The polypeptide is Sulfite reductase [NADPH] hemoprotein beta-component (Colwellia psychrerythraea (strain 34H / ATCC BAA-681) (Vibrio psychroerythus)).